The sequence spans 243 residues: uncharacterized protein (243 aa).

Residues 1–16 (MKHFIILFLLLFVTAG) form the signal peptide. Residue Cys17 is the site of N-palmitoyl cysteine attachment. A lipid anchor (S-diacylglycerol cysteine) is attached at Cys17.

It is found in the cell membrane. This is an uncharacterized protein from Bacillus subtilis (strain 168).